We begin with the raw amino-acid sequence, 210 residues long: Chaperone protein TorD (210 aa).

It belongs to the TorD/DmsD family. TorD subfamily.

The protein localises to the cytoplasm. Involved in the biogenesis of TorA. Acts on TorA before the insertion of the molybdenum cofactor and, as a result, probably favors a conformation of the apoenzyme that is competent for acquiring the cofactor. The protein is Chaperone protein TorD of Salmonella choleraesuis (strain SC-B67).